A 355-amino-acid chain; its full sequence is MSRFWNRRVRDLHPYVPGEQPKVADLLKLNTNESPHGPSPKVLAAIRDAASDDLRLYPDPTAAVLRDTIAARFGTTSDRVFVGNGSDEVLAHAFRALFHDDAPVLFSDVTYGFYPVYCGLFEQPFRHIPLNDDFAIDIDAYTGDCGGIIIANPNANTGIALPLEQIETLLKRHPDRTVIIDEAYVDFGAQSAIELTHRYDNLLVVQTLSKSYALAGLRVGFAIGSPELIEGLIRVKDSFNSYPLSRPAQAGAIAAIQDTDWLADITARVIASRDRLVPELQNLGFQVLPSCANFVLVHHPAHKAGAIAAALRERAILVRNLSTPRIQDWLRISIGTYEACIRLTDALRDILSPRS.

N6-(pyridoxal phosphate)lysine is present on lysine 210.

It belongs to the class-II pyridoxal-phosphate-dependent aminotransferase family. Histidinol-phosphate aminotransferase subfamily. As to quaternary structure, homodimer. It depends on pyridoxal 5'-phosphate as a cofactor.

It carries out the reaction L-histidinol phosphate + 2-oxoglutarate = 3-(imidazol-4-yl)-2-oxopropyl phosphate + L-glutamate. It functions in the pathway amino-acid biosynthesis; L-histidine biosynthesis; L-histidine from 5-phospho-alpha-D-ribose 1-diphosphate: step 7/9. The polypeptide is Histidinol-phosphate aminotransferase 2 (Gluconobacter oxydans (strain 621H) (Gluconobacter suboxydans)).